The following is a 322-amino-acid chain: 4-hydroxy-3-methylbut-2-enyl diphosphate reductase (322 aa).

Residue Cys-15 participates in [4Fe-4S] cluster binding. (2E)-4-hydroxy-3-methylbut-2-enyl diphosphate contacts are provided by His-44 and His-77. 2 residues coordinate dimethylallyl diphosphate: His-44 and His-77. 2 residues coordinate isopentenyl diphosphate: His-44 and His-77. Residue Cys-99 coordinates [4Fe-4S] cluster. His-127 serves as a coordination point for (2E)-4-hydroxy-3-methylbut-2-enyl diphosphate. His-127 contacts dimethylallyl diphosphate. His-127 provides a ligand contact to isopentenyl diphosphate. Glu-129 (proton donor) is an active-site residue. Thr-168 is a (2E)-4-hydroxy-3-methylbut-2-enyl diphosphate binding site. Cys-198 provides a ligand contact to [4Fe-4S] cluster. (2E)-4-hydroxy-3-methylbut-2-enyl diphosphate contacts are provided by Ser-226, Ser-227, Asn-228, and Ser-270. Positions 226, 227, 228, and 270 each coordinate dimethylallyl diphosphate. Isopentenyl diphosphate is bound by residues Ser-226, Ser-227, Asn-228, and Ser-270.

The protein belongs to the IspH family. It depends on [4Fe-4S] cluster as a cofactor.

The enzyme catalyses isopentenyl diphosphate + 2 oxidized [2Fe-2S]-[ferredoxin] + H2O = (2E)-4-hydroxy-3-methylbut-2-enyl diphosphate + 2 reduced [2Fe-2S]-[ferredoxin] + 2 H(+). It catalyses the reaction dimethylallyl diphosphate + 2 oxidized [2Fe-2S]-[ferredoxin] + H2O = (2E)-4-hydroxy-3-methylbut-2-enyl diphosphate + 2 reduced [2Fe-2S]-[ferredoxin] + 2 H(+). It participates in isoprenoid biosynthesis; dimethylallyl diphosphate biosynthesis; dimethylallyl diphosphate from (2E)-4-hydroxy-3-methylbutenyl diphosphate: step 1/1. Its pathway is isoprenoid biosynthesis; isopentenyl diphosphate biosynthesis via DXP pathway; isopentenyl diphosphate from 1-deoxy-D-xylulose 5-phosphate: step 6/6. In terms of biological role, catalyzes the conversion of 1-hydroxy-2-methyl-2-(E)-butenyl 4-diphosphate (HMBPP) into a mixture of isopentenyl diphosphate (IPP) and dimethylallyl diphosphate (DMAPP). Acts in the terminal step of the DOXP/MEP pathway for isoprenoid precursor biosynthesis. The protein is 4-hydroxy-3-methylbut-2-enyl diphosphate reductase of Neisseria meningitidis serogroup A / serotype 4A (strain DSM 15465 / Z2491).